The chain runs to 705 residues: Ribosomal RNA large subunit methyltransferase K/L (705 aa).

The THUMP domain occupies 43–154 (LMYQSLMWSR…KDTASIALDL (112 aa)).

This sequence belongs to the methyltransferase superfamily. RlmKL family.

The protein localises to the cytoplasm. It catalyses the reaction guanosine(2445) in 23S rRNA + S-adenosyl-L-methionine = N(2)-methylguanosine(2445) in 23S rRNA + S-adenosyl-L-homocysteine + H(+). The enzyme catalyses guanosine(2069) in 23S rRNA + S-adenosyl-L-methionine = N(2)-methylguanosine(2069) in 23S rRNA + S-adenosyl-L-homocysteine + H(+). Functionally, specifically methylates the guanine in position 2445 (m2G2445) and the guanine in position 2069 (m7G2069) of 23S rRNA. The chain is Ribosomal RNA large subunit methyltransferase K/L from Erwinia tasmaniensis (strain DSM 17950 / CFBP 7177 / CIP 109463 / NCPPB 4357 / Et1/99).